We begin with the raw amino-acid sequence, 134 residues long: Large ribosomal subunit protein uL16c (134 aa).

The protein belongs to the universal ribosomal protein uL16 family. As to quaternary structure, part of the 50S ribosomal subunit.

It is found in the plastid. It localises to the chloroplast. This is Large ribosomal subunit protein uL16c from Solanum lycopersicum (Tomato).